The following is a 208-amino-acid chain: NADH-quinone oxidoreductase subunit I 2 (208 aa).

2 4Fe-4S ferredoxin-type domains span residues 79 to 109 and 119 to 148; these read ILVE…IEGK and SVFN…QTDI. Residues cysteine 88, cysteine 91, cysteine 94, cysteine 98, cysteine 128, cysteine 131, cysteine 134, and cysteine 138 each coordinate [4Fe-4S] cluster.

The protein belongs to the complex I 23 kDa subunit family. NDH-1 is composed of 14 different subunits. Subunits NuoA, H, J, K, L, M, N constitute the membrane sector of the complex. It depends on [4Fe-4S] cluster as a cofactor.

It localises to the cell inner membrane. It catalyses the reaction a quinone + NADH + 5 H(+)(in) = a quinol + NAD(+) + 4 H(+)(out). Functionally, NDH-1 shuttles electrons from NADH, via FMN and iron-sulfur (Fe-S) centers, to quinones in the respiratory chain. The immediate electron acceptor for the enzyme in this species is believed to be ubiquinone. Couples the redox reaction to proton translocation (for every two electrons transferred, four hydrogen ions are translocated across the cytoplasmic membrane), and thus conserves the redox energy in a proton gradient. This Aquifex aeolicus (strain VF5) protein is NADH-quinone oxidoreductase subunit I 2.